The sequence spans 426 residues: Histidine--tRNA ligase (426 aa).

This sequence belongs to the class-II aminoacyl-tRNA synthetase family. Homodimer.

The protein resides in the cytoplasm. It carries out the reaction tRNA(His) + L-histidine + ATP = L-histidyl-tRNA(His) + AMP + diphosphate + H(+). The polypeptide is Histidine--tRNA ligase (Shewanella baltica (strain OS223)).